The sequence spans 521 residues: Cytochrome P450 monooxygenase bet2 (521 aa).

A helical membrane pass occupies residues Ser23–Val43. Asn188 is a glycosylation site (N-linked (GlcNAc...) asparagine). Cys461 contacts heme.

The protein belongs to the cytochrome P450 family. It depends on heme as a cofactor.

It is found in the membrane. It catalyses the reaction dehydroprobetaenone I + NADPH + O2 + H(+) = epoxybetaenone + NADP(+) + H2O. It carries out the reaction dehydroprobetaenone I + 3 NADPH + 3 O2 + 3 H(+) = betaenone C + 3 NADP(+) + 3 H2O. It functions in the pathway mycotoxin biosynthesis. Cytochrome P450 monooxygenase; part of the gene cluster that mediates the biosynthesis of betaenones, phytotoxic polyketides involved in leaf spot disease in sugar beets. The first step of the pathway is the synthesis of dehydroprobetaenone I by the polyketide synthase bet1 and the enoyl reductase bet3 via condensation of one acetyl-CoA starter unit with 7 malonyl-CoA units and 5 methylations. The C-terminal reductase (R) domain of bet1 catalyzes the reductive release of the polyketide chain. Because bet1 lacks a designated enoylreductase (ER) domain, the required activity is provided the enoyl reductase bet3. The short-chain dehydrogenase/reductase bet4 then catalyzes reduction of dehydroprobetaenone I to probetaenone I. The cytochrome P450 monooxygenase bet2 catalyzes successive epoxidation, oxidation (resulting from epoxide opening) and hydroxylation to install a tertiary alcohol in the decaline ring to yield betaenone C from dehydroprobetaenone I and betaenone B from probetaenone I. The FAD-linked oxidoreductase (orf1) is probably responsible for the conversion of betaenone C to betaenone A via an intramolecular aldol reaction between C-1 and C-17 to form the bridged tricyclic system in betaenone A. The sequence is that of Cytochrome P450 monooxygenase bet2 from Neocamarosporium betae (Beet black rot fungus).